We begin with the raw amino-acid sequence, 483 residues long: Regulatory protein ViaA (483 aa).

This sequence belongs to the ViaA family. Homodimer. Interacts with RavA.

It is found in the cytoplasm. Component of the RavA-ViaA chaperone complex, which may act on the membrane to optimize the function of some of the respiratory chains. ViaA stimulates the ATPase activity of RavA. This is Regulatory protein ViaA from Enterobacter sp. (strain 638).